We begin with the raw amino-acid sequence, 218 residues long: Oxaloacetate decarboxylase, mitochondrial (218 aa).

Residues 1 to 18 (MNKFWETGRKIVAVGRNY) constitute a mitochondrion transit peptide. Positions 63, 65, and 94 each coordinate Mg(2+).

This sequence belongs to the FAH family. As to quaternary structure, homodimer. The cofactor is Mg(2+). Requires Mn(2+) as cofactor.

The protein resides in the mitochondrion. Its subcellular location is the cytoplasm. It localises to the cytosol. The catalysed reaction is a 3-acylpyruvate + H2O = a carboxylate + pyruvate + H(+). It catalyses the reaction acetylpyruvate + H2O = acetate + pyruvate + H(+). The enzyme catalyses 3-fumarylpyruvate + H2O = fumarate + pyruvate + H(+). It carries out the reaction oxaloacetate + H(+) = pyruvate + CO2. In terms of biological role, mitochondrial protein that acts as an oxaloacetate decarboxylase (ODx), catalyzing the decarboxylation of oxaloacetate (OAA) to pyruvate and CO(2), and as such is likely a regulatory enzyme in the TCA cycle. Also displays acylpyruvase activity, being able to hydrolyze acetylpyruvate and fumarylpyruvate in vitro. The protein is Oxaloacetate decarboxylase, mitochondrial (fahd1) of Dictyostelium discoideum (Social amoeba).